The sequence spans 433 residues: Probable M18 family aminopeptidase 2 (433 aa).

Zn(2+) contacts are provided by His84, His161, and His409.

It belongs to the peptidase M18 family. The cofactor is Zn(2+).

The chain is Probable M18 family aminopeptidase 2 (apeB) from Clostridium acetobutylicum (strain ATCC 824 / DSM 792 / JCM 1419 / IAM 19013 / LMG 5710 / NBRC 13948 / NRRL B-527 / VKM B-1787 / 2291 / W).